The following is a 162-amino-acid chain: uncharacterized protein (162 aa).

The next 3 membrane-spanning stretches (helical) occupy residues 7 to 27 (LIAD…IVGL), 51 to 71 (LSIL…YMIG), and 134 to 154 (TYVA…ITIG).

This sequence belongs to the DedA family.

The protein resides in the cell membrane. This is an uncharacterized protein from Bacillus subtilis (strain 168).